Consider the following 146-residue polypeptide: MLLQGTHRIGRMAMLLALADQNESPVLSIPKGWKYCTGKVGSMNSQKVVAAMETAAKSNQVIETDVYRETHALYHAIMEALYGVTRGQIQLADVLRTVGLRFAIVRGTPYDGKKEGEWVAVALYGTIGAPVKGSEHEAIGLGINHI.

The protein belongs to the HutP family. As to quaternary structure, homohexamer.

Antiterminator that binds to cis-acting regulatory sequences on the mRNA in the presence of histidine, thereby suppressing transcription termination and activating the hut operon for histidine utilization. This chain is Hut operon positive regulatory protein, found in Bacillus cereus (strain AH820).